Consider the following 358-residue polypeptide: DNA polymerase IV (358 aa).

The UmuC domain maps to 4–185 (IIHIDMDCYF…LSLRKIPGVG (182 aa)). The Mg(2+) site is built by aspartate 8 and aspartate 103. Glutamate 104 is an active-site residue.

The protein belongs to the DNA polymerase type-Y family. In terms of assembly, monomer. It depends on Mg(2+) as a cofactor.

The protein localises to the cytoplasm. It catalyses the reaction DNA(n) + a 2'-deoxyribonucleoside 5'-triphosphate = DNA(n+1) + diphosphate. In terms of biological role, poorly processive, error-prone DNA polymerase involved in untargeted mutagenesis. Copies undamaged DNA at stalled replication forks, which arise in vivo from mismatched or misaligned primer ends. These misaligned primers can be extended by PolIV. Exhibits no 3'-5' exonuclease (proofreading) activity. May be involved in translesional synthesis, in conjunction with the beta clamp from PolIII. The chain is DNA polymerase IV from Shewanella baltica (strain OS185).